Reading from the N-terminus, the 237-residue chain is Aliphatic sulfonates import ATP-binding protein SsuB 1 (237 aa).

The ABC transporter domain occupies 5–221 (LMNIRVDRKA…PRDRRDPLLA (217 aa)). An ATP-binding site is contributed by 38-45 (GPSGCGKS).

Belongs to the ABC transporter superfamily. Aliphatic sulfonates importer (TC 3.A.1.17.2) family. The complex is composed of two ATP-binding proteins (SsuB), two transmembrane proteins (SsuC) and a solute-binding protein (SsuA).

Its subcellular location is the cell inner membrane. It catalyses the reaction ATP + H2O + aliphatic sulfonate-[sulfonate-binding protein]Side 1 = ADP + phosphate + aliphatic sulfonateSide 2 + [sulfonate-binding protein]Side 1.. In terms of biological role, part of the ABC transporter complex SsuABC involved in aliphatic sulfonates import. Responsible for energy coupling to the transport system. The polypeptide is Aliphatic sulfonates import ATP-binding protein SsuB 1 (Pseudomonas savastanoi pv. phaseolicola (strain 1448A / Race 6) (Pseudomonas syringae pv. phaseolicola (strain 1448A / Race 6))).